The sequence spans 1058 residues: Carbamoyl phosphate synthase large chain (1058 aa).

The segment at methionine 1–glutamate 401 is carboxyphosphate synthetic domain. Positions 129, 169, 175, 176, 208, 210, 215, 241, 242, 243, 284, and 298 each coordinate ATP. The ATP-grasp 1 domain occupies lysine 133 to valine 327. The Mg(2+) site is built by glutamine 284, glutamate 298, and asparagine 300. Mn(2+) is bound by residues glutamine 284, glutamate 298, and asparagine 300. Residues isoleucine 402–serine 546 form an oligomerization domain region. The carbamoyl phosphate synthetic domain stretch occupies residues isoleucine 547 to tyrosine 929. The region spanning glutamate 671–leucine 861 is the ATP-grasp 2 domain. 10 residues coordinate ATP: arginine 707, serine 746, isoleucine 748, glutamate 752, glycine 777, valine 778, histidine 779, serine 780, glutamine 820, and glutamate 832. Residues glutamine 820, glutamate 832, and asparagine 834 each coordinate Mg(2+). Residues glutamine 820, glutamate 832, and asparagine 834 each contribute to the Mn(2+) site. Residues leucine 930–isoleucine 1058 enclose the MGS-like domain. The tract at residues leucine 930 to isoleucine 1058 is allosteric domain.

It belongs to the CarB family. In terms of assembly, composed of two chains; the small (or glutamine) chain promotes the hydrolysis of glutamine to ammonia, which is used by the large (or ammonia) chain to synthesize carbamoyl phosphate. Tetramer of heterodimers (alpha,beta)4. Requires Mg(2+) as cofactor. It depends on Mn(2+) as a cofactor.

The catalysed reaction is hydrogencarbonate + L-glutamine + 2 ATP + H2O = carbamoyl phosphate + L-glutamate + 2 ADP + phosphate + 2 H(+). It carries out the reaction hydrogencarbonate + NH4(+) + 2 ATP = carbamoyl phosphate + 2 ADP + phosphate + 2 H(+). It participates in amino-acid biosynthesis; L-arginine biosynthesis; carbamoyl phosphate from bicarbonate: step 1/1. Its pathway is pyrimidine metabolism; UMP biosynthesis via de novo pathway; (S)-dihydroorotate from bicarbonate: step 1/3. Large subunit of the glutamine-dependent carbamoyl phosphate synthetase (CPSase). CPSase catalyzes the formation of carbamoyl phosphate from the ammonia moiety of glutamine, carbonate, and phosphate donated by ATP, constituting the first step of 2 biosynthetic pathways, one leading to arginine and/or urea and the other to pyrimidine nucleotides. The large subunit (synthetase) binds the substrates ammonia (free or transferred from glutamine from the small subunit), hydrogencarbonate and ATP and carries out an ATP-coupled ligase reaction, activating hydrogencarbonate by forming carboxy phosphate which reacts with ammonia to form carbamoyl phosphate. This chain is Carbamoyl phosphate synthase large chain, found in Streptococcus pneumoniae (strain 70585).